The primary structure comprises 201 residues: CASP-like protein 2B2 (201 aa).

At 1–28 the chain is on the cytoplasmic side; it reads MSYLGVGVSPGNVSGSTTKMKLIDRKVR. A helical transmembrane segment spans residues 29 to 49; it reads VTELILRCLVCVLALVAAILI. At 50–71 the chain is on the extracellular side; that stretch reads ATDVQVREIFMIQKKAKFTDMK. The helical transmembrane segment at 72-92 threads the bilayer; the sequence is ALVLLVVVNGIAAGYSLVQAV. Over 93–108 the chain is Cytoplasmic; the sequence is RCVVGLMKGRVLFSKP. The chain crosses the membrane as a helical span at residues 109 to 129; sequence LAWAIFFGDQAVAYLCVAGVA. Topologically, residues 130–166 are extracellular; sequence AAAQSAAFAKLGEPELQWMKICNMYGKFCNQVGEGIA. The helical transmembrane segment at 167–187 threads the bilayer; it reads SALFACIGMVLISCISAFGVF. Over 188–201 the chain is Cytoplasmic; sequence RLYGGSKSRPSSRW.

It belongs to the Casparian strip membrane proteins (CASP) family. Homodimer and heterodimers.

The protein resides in the cell membrane. The chain is CASP-like protein 2B2 from Arabidopsis thaliana (Mouse-ear cress).